A 685-amino-acid polypeptide reads, in one-letter code: Augmin complex subunit dgt5 (685 aa).

Coiled-coil stretches lie at residues 87-165 (LQRY…NKIQ) and 342-379 (NMRN…DLKL).

Component of the augmin complex composed of dgt2, dgt3, dgt4, dgt5, dgt6, msd1, msd5 and wac. The complex interacts directly or indirectly with microtubules and is required for centrosome-independent generation of spindle microtubules.

The protein resides in the cytoplasm. Its subcellular location is the cytoskeleton. The protein localises to the spindle. It localises to the chromosome. It is found in the centromere. The protein resides in the kinetochore. Its subcellular location is the microtubule organizing center. The protein localises to the centrosome. Functionally, as part of the augmin complex, plays a role in centrosome-independent generation of spindle microtubules. The complex is required for mitotic spindle assembly through its involvement in localizing gamma-tubulin to spindle microtubules. This Drosophila melanogaster (Fruit fly) protein is Augmin complex subunit dgt5.